The following is a 189-amino-acid chain: Ion-translocating oxidoreductase complex subunit B (189 aa).

The tract at residues 1-26 (MSQVIIAIILLGLLALAFGALLGYAA) is hydrophobic. Residues 32–90 (EGDPIIDQAEALLPQTQCGQCGYPGCRPYAEAIANGEKINKCPPGGTATMEKLAELMGV) enclose the 4Fe-4S domain. Residues Cys49, Cys52, Cys57, Cys73, Cys114, Cys117, Cys120, Cys124, Cys144, Cys147, Cys150, and Cys154 each coordinate [4Fe-4S] cluster. 4Fe-4S ferredoxin-type domains are found at residues 105-134 (KVAF…GTGK) and 135-164 (QMHT…MIPV).

Belongs to the 4Fe4S bacterial-type ferredoxin family. RnfB subfamily. The complex is composed of six subunits: RnfA, RnfB, RnfC, RnfD, RnfE and RnfG. [4Fe-4S] cluster is required as a cofactor.

It is found in the cell inner membrane. Part of a membrane-bound complex that couples electron transfer with translocation of ions across the membrane. The protein is Ion-translocating oxidoreductase complex subunit B of Shewanella loihica (strain ATCC BAA-1088 / PV-4).